Consider the following 211-residue polypeptide: Uracil phosphoribosyltransferase (211 aa).

Residues Arg-79, Arg-104, and 131–139 contribute to the 5-phospho-alpha-D-ribose 1-diphosphate site; that span reads DPMLATGGS. Uracil is bound by residues Ile-196 and 201 to 203; that span reads GDA. Asp-202 contributes to the 5-phospho-alpha-D-ribose 1-diphosphate binding site.

Belongs to the UPRTase family. Requires Mg(2+) as cofactor.

It carries out the reaction UMP + diphosphate = 5-phospho-alpha-D-ribose 1-diphosphate + uracil. The protein operates within pyrimidine metabolism; UMP biosynthesis via salvage pathway; UMP from uracil: step 1/1. Its activity is regulated as follows. Allosterically activated by GTP. Functionally, catalyzes the conversion of uracil and 5-phospho-alpha-D-ribose 1-diphosphate (PRPP) to UMP and diphosphate. The chain is Uracil phosphoribosyltransferase from Limosilactobacillus fermentum (strain NBRC 3956 / LMG 18251) (Lactobacillus fermentum).